A 132-amino-acid chain; its full sequence is Small ribosomal subunit protein uS8 (132 aa).

It belongs to the universal ribosomal protein uS8 family. Part of the 30S ribosomal subunit. Contacts proteins S5 and S12.

In terms of biological role, one of the primary rRNA binding proteins, it binds directly to 16S rRNA central domain where it helps coordinate assembly of the platform of the 30S subunit. The sequence is that of Small ribosomal subunit protein uS8 from Mycobacterium marinum (strain ATCC BAA-535 / M).